We begin with the raw amino-acid sequence, 1011 residues long: Ankyrin repeat domain-containing protein 18B (1011 aa).

5 ANK repeats span residues 67–96, 100–129, 133–162, 166–195, and 199–228; these read KDRTVLHLACAHGRVQVVTLLLDRKCQINI, LNRTPLMKAVHCQEEACAIILLKRGANPNI, YGNTALHYAVYNEGTSLAERLLSHHANIEA, EGNTPLLFAINSRRQHMVEFLLKNQANIHA, and FKRTALILAVQHNLSSIVTLLLQQNIHISS. Disordered stretches follow at residues 264–330 and 533–554; these read LRND…GKKK and MHPNGEAKESQSIGKQNSSEER. Coiled coils occupy residues 277 to 319, 385 to 639, 692 to 722, and 752 to 908; these read ENLK…ENKQ, NEEM…ELVD, ISLLNYTADQIRKKNRELEEEATGYKKCLEM, and FKKL…EAFA. Residues 280–293 show a composition bias toward basic residues; sequence KKRKKRKKLKKRKE. The segment covering 294 to 319 has biased composition (basic and acidic residues); that stretch reads GAKAEHNLKVASEEKQERLERSENKQ.

In Homo sapiens (Human), this protein is Ankyrin repeat domain-containing protein 18B (ANKRD18B).